A 457-amino-acid chain; its full sequence is MADS-box transcription factor 1 (457 aa).

Residues 11–71 (PSSPRRSIQR…NACHVYSSEE (61 aa)) form the MADS-box domain. Disordered regions lie at residues 195 to 278 (SGDY…SRLH) and 295 to 328 (SSGY…LGQE). Residues 199–216 (SDSPLEPSSSSSFSVPPE) show a composition bias toward low complexity. Positions 218-234 (LNPTLSFQHNDVPQTDN) are enriched in polar residues. Over residues 265 to 278 (KNRRNGKPRISRLH) the composition is skewed to basic residues. Polar residues predominate over residues 295-317 (SSGYLDPSSTPITPLDSAINQIT). Phosphoserine is present on Ser372.

In terms of processing, phosphorylated. Occurs periodically during mitosis.

The protein resides in the nucleus. Functionally, acts as a transcriptional activator with a role in the regulation of mitosis. Regulates septation and the periodic transcription of cdc15. This chain is MADS-box transcription factor 1 (mbx1), found in Schizosaccharomyces pombe (strain 972 / ATCC 24843) (Fission yeast).